The chain runs to 565 residues: Oxygen-dependent choline dehydrogenase (565 aa).

Asp7–Glu36 provides a ligand contact to FAD. His474 acts as the Proton acceptor in catalysis.

The protein belongs to the GMC oxidoreductase family. FAD serves as cofactor.

The enzyme catalyses choline + A = betaine aldehyde + AH2. The catalysed reaction is betaine aldehyde + NAD(+) + H2O = glycine betaine + NADH + 2 H(+). Its pathway is amine and polyamine biosynthesis; betaine biosynthesis via choline pathway; betaine aldehyde from choline (cytochrome c reductase route): step 1/1. Involved in the biosynthesis of the osmoprotectant glycine betaine. Catalyzes the oxidation of choline to betaine aldehyde and betaine aldehyde to glycine betaine at the same rate. This is Oxygen-dependent choline dehydrogenase from Burkholderia pseudomallei (strain K96243).